A 516-amino-acid polypeptide reads, in one-letter code: Probable 2-isopropylmalate synthase (516 aa).

Residues 20-271 (VTVFDTTLRD…KTNIRTEYLV (252 aa)) enclose the Pyruvate carboxyltransferase domain.

Belongs to the alpha-IPM synthase/homocitrate synthase family.

It catalyses the reaction 3-methyl-2-oxobutanoate + acetyl-CoA + H2O = (2S)-2-isopropylmalate + CoA + H(+). It participates in amino-acid biosynthesis; L-leucine biosynthesis; L-leucine from 3-methyl-2-oxobutanoate: step 1/4. In terms of biological role, catalyzes the condensation of the acetyl group of acetyl-CoA with 3-methyl-2-oxobutanoate (2-oxoisovalerate) to form 3-carboxy-3-hydroxy-4-methylpentanoate (2-isopropylmalate). This Methanosarcina mazei (strain ATCC BAA-159 / DSM 3647 / Goe1 / Go1 / JCM 11833 / OCM 88) (Methanosarcina frisia) protein is Probable 2-isopropylmalate synthase (leuA).